The sequence spans 182 residues: UPF0397 protein SPP_0507 (182 aa).

A run of 5 helical transmembrane segments spans residues 10–30 (VVAV…NIPT), 46–66 (LLSI…GHAI), 73–93 (YGLW…VGLF), 109–129 (ILIF…VLAP), and 148–168 (IVAG…LLLA).

It belongs to the UPF0397 family.

Its subcellular location is the cell membrane. The sequence is that of UPF0397 protein SPP_0507 from Streptococcus pneumoniae (strain P1031).